We begin with the raw amino-acid sequence, 151 residues long: Large ribosomal subunit protein uL13 (151 aa).

It belongs to the universal ribosomal protein uL13 family. Part of the 50S ribosomal subunit.

Its function is as follows. This protein is one of the early assembly proteins of the 50S ribosomal subunit, although it is not seen to bind rRNA by itself. It is important during the early stages of 50S assembly. The sequence is that of Large ribosomal subunit protein uL13 from Rippkaea orientalis (strain PCC 8801 / RF-1) (Cyanothece sp. (strain PCC 8801)).